The following is a 776-amino-acid chain: DNA ligase (776 aa).

NAD(+) contacts are provided by residues 31–35 (DAEYD), 80–81 (SL), and Glu-112. The N6-AMP-lysine intermediate role is filled by Lys-114. The NAD(+) site is built by Arg-135, Glu-172, Lys-288, and Lys-312. Zn(2+) is bound by residues Cys-406, Cys-409, Cys-436, and Cys-442. A BRCT domain is found at 693–776 (AEGLPLAGQT…VFLDEQGIAI (84 aa)).

It belongs to the NAD-dependent DNA ligase family. LigA subfamily. Requires Mg(2+) as cofactor. Mn(2+) serves as cofactor.

It carries out the reaction NAD(+) + (deoxyribonucleotide)n-3'-hydroxyl + 5'-phospho-(deoxyribonucleotide)m = (deoxyribonucleotide)n+m + AMP + beta-nicotinamide D-nucleotide.. DNA ligase that catalyzes the formation of phosphodiester linkages between 5'-phosphoryl and 3'-hydroxyl groups in double-stranded DNA using NAD as a coenzyme and as the energy source for the reaction. It is essential for DNA replication and repair of damaged DNA. This chain is DNA ligase, found in Pseudomonas putida (strain W619).